The sequence spans 546 residues: Sulfite oxidase, mitochondrial (546 aa).

Residues 1-80 (MLPRLYRSVA…YHDHRCRASQ (80 aa)) constitute a mitochondrion transit peptide. One can recognise a Cytochrome b5 heme-binding domain in the interval 83–162 (PRIYSKEDVR…LAEYKIGELN (80 aa)). Position 119 (histidine 119) interacts with heme b. The residue at position 124 (serine 124) is a Phosphoserine. Histidine 144, glutamine 146, and histidine 148 together coordinate heme b. The tract at residues 166-175 (RMSPPLEASD) is hinge. The interval 176–402 (PYSNDPMRHP…YSHWQRRDYK (227 aa)) is moco domain. Residues 216–220 (FTRNH), cysteine 265, aspartate 323, histidine 362, arginine 367, and 378–380 (HVK) contribute to the Mo-molybdopterin site. The tract at residues 403 to 539 (GFSPSVDWDT…RGVLSNAWHR (137 aa)) is homodimerization.

As to quaternary structure, homodimer. Heme b is required as a cofactor. The cofactor is Mo-molybdopterin.

The protein localises to the mitochondrion intermembrane space. It catalyses the reaction sulfite + O2 + H2O = sulfate + H2O2. It functions in the pathway energy metabolism; sulfur metabolism. Its function is as follows. Catalyzes the oxidation of sulfite to sulfate, the terminal reaction in the oxidative degradation of sulfur-containing amino acids. This is Sulfite oxidase, mitochondrial from Rattus norvegicus (Rat).